Reading from the N-terminus, the 615-residue chain is Sodium-dependent neutral amino acid transporter B(0)AT3 (615 aa).

Residues 1–26 (MAQASGMDPLVDIEDERPKWDNKLQY) lie on the Cytoplasmic side of the membrane. Residues 27–47 (LLSCIGFAVGLGNIWRFPYLC) form a helical membrane-spanning segment. Over 48 to 52 (QTHGG) the chain is Extracellular. Residues 53–73 (GAFLIPYFIALVFEGIPLFYI) traverse the membrane as a helical segment. The Cytoplasmic segment spans residues 74 to 105 (ELAIGQRLRRGSIGVWKTISPYLGGVGLGCFS). A helical transmembrane segment spans residues 106 to 126 (VSFLVSLYYNTVLLWVLWFFL). At 127-177 (NSFQHPLPWSTCPLDLNRTGFVQECQSSGTVSYFWYRQTLNITSDISNTGT) the chain is on the extracellular side. N-linked (GlcNAc...) asparagine glycans are attached at residues Asn-143 and Asn-167. A helical transmembrane segment spans residues 178–198 (IQWKLFLCLVACWSTVYLCVI). Over 199–206 (RGIESTGK) the chain is Cytoplasmic. The chain crosses the membrane as a helical span at residues 207 to 227 (VIYFTALFPYLVLTIFLIRGL). Topologically, residues 228-255 (TLPGATEGLIYLFTPNMKTLQNPRVWLD) are extracellular. A helical transmembrane segment spans residues 256 to 276 (AATQIFFSLSLAFGGHIAFAS). At 277–288 (YNPPRNNCEKDA) the chain is on the cytoplasmic side. Residues 289–309 (VIIALVNSMTSLYASIAIFSV) form a helical membrane-spanning segment. Over 310–397 (MGFKASNDYG…FTEAVLHMPG (88 aa)) the chain is Extracellular. Asn-353 is a glycosylation site (N-linked (GlcNAc...) asparagine). The chain crosses the membrane as a helical span at residues 398–418 (ASVWSVLFFGMLFTLGLSSMF). Over 419-441 (GNMEGVITPLLDMGILPKGIPKE) the chain is Cytoplasmic. Residues 442 to 462 (VMTGVICFACFLSAICFTLQS) form a helical membrane-spanning segment. Residues 463 to 472 (GGYWLEIFDS) are Extracellular-facing. Residues 473–493 (FAASLNLIIFAFMEVVGVIHI) traverse the membrane as a helical segment. The Cytoplasmic portion of the chain corresponds to 494 to 520 (YGMKRFCDDIEWMTGRRPGLYWQVTWR). Residues 521–541 (VVSPMLLFGIFLSYIVLLIQT) traverse the membrane as a helical segment. Residues 542 to 570 (PPSYKAWNPQYEHFPSREEKFYPGWVQVT) lie on the Extracellular side of the membrane. The chain crosses the membrane as a helical span at residues 571–591 (CVLLSFLPSLWVPGVALAQLL). Over 592–615 (SQYKQRWKATHLESGLKLQESRGC) the chain is Cytoplasmic.

This sequence belongs to the sodium:neurotransmitter symporter (SNF) (TC 2.A.22) family. SLC6A18 subfamily. As to quaternary structure, interacts with CLTRN; this interaction regulates the trafficking of SLC6A18 to the cell membrane and its activity. As to expression, expressed predominantly in kidney.

It is found in the apical cell membrane. The protein localises to the cell membrane. The catalysed reaction is L-alanine(out) + chloride(out) + 2 Na(+)(out) = L-alanine(in) + chloride(in) + 2 Na(+)(in). It catalyses the reaction glycine(out) + chloride(out) + 2 Na(+)(out) = glycine(in) + chloride(in) + 2 Na(+)(in). It carries out the reaction L-methionine(out) + chloride(out) + 2 Na(+)(out) = L-methionine(in) + chloride(in) + 2 Na(+)(in). The enzyme catalyses L-valine(out) + chloride(out) + 2 Na(+)(out) = L-valine(in) + chloride(in) + 2 Na(+)(in). The catalysed reaction is L-isoleucine(out) + chloride(out) + 2 Na(+)(out) = L-isoleucine(in) + chloride(in) + 2 Na(+)(in). It catalyses the reaction L-serine(out) + chloride(out) + 2 Na(+)(out) = L-serine(in) + chloride(in) + 2 Na(+)(in). It carries out the reaction L-leucine(out) + chloride(out) + 2 Na(+)(out) = L-leucine(in) + chloride(in) + 2 Na(+)(in). Its function is as follows. Symporter that transports one amino acid molecule together with two sodium and one chloride ions in kidneys and plays a role in the neutral amino acids reabsorption. Preferentially transports neutral amino acids such as L-glycine and L-alanine but also other neutral amino acids. Required CLTRN for cell surface expression and for its amino acid transporter activity. The transport mechanism is pH-independent. The chain is Sodium-dependent neutral amino acid transporter B(0)AT3 from Mus musculus (Mouse).